The primary structure comprises 60 residues: MRCLPVFVILLLLIASTPSVNARPKTKDLASFHDNAKRTQHIFWSKRNCCIYENWCCEWI.

Positions 1-22 are cleaved as a signal peptide; the sequence is MRCLPVFVILLLLIASTPSVNA. Residues 23 to 45 constitute a propeptide that is removed on maturation; it reads RPKTKDLASFHDNAKRTQHIFWS.

It belongs to the conotoxin T superfamily. Contains 2 disulfide bonds that can be either 'C1-C3, C2-C4' or 'C1-C4, C2-C3', since these disulfide connectivities have been observed for conotoxins with cysteine framework V (for examples, see AC P0DQQ7 and AC P81755). As to expression, expressed by the venom duct.

It localises to the secreted. The sequence is that of Conotoxin PnMRCL-022 from Conus pennaceus (Feathered cone).